A 309-amino-acid polypeptide reads, in one-letter code: Polyprenal reductase (309 aa).

The next 7 helical transmembrane spans lie at 12–32 (LPLY…FTLI), 72–92 (FYAI…SLIY), 114–134 (IPPI…LHVA), 151–171 (MNLF…ISIM), 184–204 (LHVS…LFWI), 242–262 (LVSC…FLVI), and 270–290 (FIIM…HSWY).

Belongs to the steroid 5-alpha reductase family. Polyprenal reductase subfamily.

Its subcellular location is the endoplasmic reticulum membrane. It carries out the reaction a di-trans,poly-cis-dolichal + NADP(+) = a di-trans,poly-cis-polyprenal + NADPH + H(+). It functions in the pathway protein modification; protein glycosylation. Plays a key role in early steps of protein N-linked glycosylation by being involved in the conversion of polyprenol into dolichol. Acts as a polyprenal reductase that mediates the reduction of polyprenal into dolichal in a NADP-dependent mechanism. Dolichols are required for the synthesis of dolichol-linked monosaccharides and the oligosaccharide precursor used for N-glycosylation. The polypeptide is Polyprenal reductase (Caenorhabditis elegans).